The following is a 374-amino-acid chain: MNANAPVQPSLDDLLGRIVRDDVRAMGAYHVPDASGMVKLDAMENPYHLPAMLRDALGKRLAEVALNRYPVPTADALKAQLKRVMRVPAGADVLLGNGSDEIISLIAIAAAKPGATVLAPVPGFVMYAMSAQLMGLKFVGVPLRADLTLDREAMLAAMAEHQPAVIYLAYPNNPTGNLFDAADMDALLRAARGPVCQSLVVVDEAYQPFAQHSWMPRLPEFDHLLVMRTVSKLGLAGIRLGYVAGHPKWIAELDKVRPPYNVNVLTEATAAFVLDHVDVLDAQAATLRAERTRLIDALSAQPGVTVFPSAANFLLLRVPDAAGLFERLLKRRVLVKNVSKMHPLLANCLRVTVSNPEENAQFLDAFAASLQDTP.

Lys-232 is subject to N6-(pyridoxal phosphate)lysine.

Belongs to the class-II pyridoxal-phosphate-dependent aminotransferase family. Histidinol-phosphate aminotransferase subfamily. In terms of assembly, homodimer. The cofactor is pyridoxal 5'-phosphate.

The enzyme catalyses L-histidinol phosphate + 2-oxoglutarate = 3-(imidazol-4-yl)-2-oxopropyl phosphate + L-glutamate. It functions in the pathway amino-acid biosynthesis; L-histidine biosynthesis; L-histidine from 5-phospho-alpha-D-ribose 1-diphosphate: step 7/9. The polypeptide is Histidinol-phosphate aminotransferase 1 (hisC1) (Ralstonia nicotianae (strain ATCC BAA-1114 / GMI1000) (Ralstonia solanacearum)).